Reading from the N-terminus, the 2375-residue chain is Talin-2 (2375 aa).

Residues R88 to K406 form the FERM domain. An interaction with PIP5K1C region spans residues G312 to K406. 4 positions are modified to phosphoserine: S428, S450, S624, and S1024. A Phosphotyrosine modification is found at Y1666. The 171-residue stretch at T2205–V2375 folds into the I/LWEQ domain.

As to quaternary structure, interacts directly with PIP5K1C.

It localises to the cytoplasm. The protein resides in the cell junction. The protein localises to the focal adhesion. It is found in the synapse. Its subcellular location is the cell membrane. It localises to the cytoskeleton. As a major component of focal adhesion plaques that links integrin to the actin cytoskeleton, may play an important role in cell adhesion. Recruits PIP5K1C to focal adhesion plaques and strongly activates its kinase activity. The polypeptide is Talin-2 (Tln2) (Mus musculus (Mouse)).